The sequence spans 187 residues: 3'-5' DNA exonuclease Cap18 (187 aa).

One can recognise an Exonuclease domain in the interval 9 to 173 (VSVDVETSGP…HDARYQAELF (165 aa)). 4 residues coordinate Mg(2+): D12, M25, H160, and D165. The Proton donor/acceptor role is filled by H160.

Belongs to the Cap18 exonuclease family. As to quaternary structure, homodimer.

Effector component of a CBASS antivirus system. CBASS (cyclic oligonucleotide-based antiphage signaling system) provides immunity against bacteriophage. The CD-NTase protein synthesizes cyclic nucleotides in response to infection; these serve as specific second messenger signals. The signals activate a diverse range of effectors, leading to bacterial cell death and thus abortive phage infection. A type III CBASS system. A sequence non-specific 3'-5' DNA exonuclease that preferentially degrades ssDNA with 3' overhangs or a mismatch at the 3' end. Expression of this CBASS system (Cap17-CapW-CdnC-Cap7-Cap6-Cap18-Cap19) in a susceptible E.coli (strain JP313) confers resistance to bacteriophage lambda cI--. The protein is 3'-5' DNA exonuclease Cap18 of Escherichia coli.